A 460-amino-acid polypeptide reads, in one-letter code: Bifunctional protein GlmU (460 aa).

Positions 1–229 (MTNYAIILAA…FNESLGVNDR (229 aa)) are pyrophosphorylase. UDP-N-acetyl-alpha-D-glucosamine contacts are provided by residues 8–11 (LAAG), lysine 22, glutamine 72, and 77–78 (GT). Aspartate 102 serves as a coordination point for Mg(2+). 4 residues coordinate UDP-N-acetyl-alpha-D-glucosamine: glycine 139, glutamate 154, asparagine 169, and asparagine 227. Position 227 (asparagine 227) interacts with Mg(2+). Positions 230–250 (VALAIAETVMRQRITQKHMVN) are linker. The interval 251–460 (GVTFQNPETV…RLAHHPSRSK (210 aa)) is N-acetyltransferase. UDP-N-acetyl-alpha-D-glucosamine is bound by residues arginine 332 and lysine 350. Histidine 362 acts as the Proton acceptor in catalysis. Tyrosine 365 and asparagine 376 together coordinate UDP-N-acetyl-alpha-D-glucosamine. Acetyl-CoA-binding positions include alanine 379, 385–386 (NY), serine 404, alanine 422, and arginine 439.

The protein in the N-terminal section; belongs to the N-acetylglucosamine-1-phosphate uridyltransferase family. This sequence in the C-terminal section; belongs to the transferase hexapeptide repeat family. As to quaternary structure, homotrimer. Mg(2+) serves as cofactor.

It localises to the cytoplasm. It catalyses the reaction alpha-D-glucosamine 1-phosphate + acetyl-CoA = N-acetyl-alpha-D-glucosamine 1-phosphate + CoA + H(+). The enzyme catalyses N-acetyl-alpha-D-glucosamine 1-phosphate + UTP + H(+) = UDP-N-acetyl-alpha-D-glucosamine + diphosphate. It functions in the pathway nucleotide-sugar biosynthesis; UDP-N-acetyl-alpha-D-glucosamine biosynthesis; N-acetyl-alpha-D-glucosamine 1-phosphate from alpha-D-glucosamine 6-phosphate (route II): step 2/2. It participates in nucleotide-sugar biosynthesis; UDP-N-acetyl-alpha-D-glucosamine biosynthesis; UDP-N-acetyl-alpha-D-glucosamine from N-acetyl-alpha-D-glucosamine 1-phosphate: step 1/1. The protein operates within bacterial outer membrane biogenesis; LPS lipid A biosynthesis. Functionally, catalyzes the last two sequential reactions in the de novo biosynthetic pathway for UDP-N-acetylglucosamine (UDP-GlcNAc). The C-terminal domain catalyzes the transfer of acetyl group from acetyl coenzyme A to glucosamine-1-phosphate (GlcN-1-P) to produce N-acetylglucosamine-1-phosphate (GlcNAc-1-P), which is converted into UDP-GlcNAc by the transfer of uridine 5-monophosphate (from uridine 5-triphosphate), a reaction catalyzed by the N-terminal domain. This chain is Bifunctional protein GlmU, found in Streptococcus pyogenes serotype M1.